A 249-amino-acid polypeptide reads, in one-letter code: ATP synthase subunit a (249 aa).

The next 5 membrane-spanning stretches (helical) occupy residues Gly-33–Ala-53, Val-92–Ile-112, Ile-131–Ser-151, Leu-196–Leu-216, and Gly-217–Gly-237.

Belongs to the ATPase A chain family. As to quaternary structure, F-type ATPases have 2 components, CF(1) - the catalytic core - and CF(0) - the membrane proton channel. CF(1) has five subunits: alpha(3), beta(3), gamma(1), delta(1), epsilon(1). CF(0) has four main subunits: a, b, b' and c.

The protein resides in the cellular thylakoid membrane. Functionally, key component of the proton channel; it plays a direct role in the translocation of protons across the membrane. The chain is ATP synthase subunit a from Synechococcus elongatus (strain ATCC 33912 / PCC 7942 / FACHB-805) (Anacystis nidulans R2).